We begin with the raw amino-acid sequence, 190 residues long: dCTP deaminase (190 aa).

107 to 112 serves as a coordination point for dCTP; sequence KSTYAR. Glu133 functions as the Proton donor/acceptor in the catalytic mechanism. Residues Gln152, Tyr166, and Gln176 each coordinate dCTP.

Belongs to the dCTP deaminase family. As to quaternary structure, homotrimer.

It carries out the reaction dCTP + H2O + H(+) = dUTP + NH4(+). The protein operates within pyrimidine metabolism; dUMP biosynthesis; dUMP from dCTP (dUTP route): step 1/2. Functionally, catalyzes the deamination of dCTP to dUTP. This is dCTP deaminase from Campylobacter hominis (strain ATCC BAA-381 / DSM 21671 / CCUG 45161 / LMG 19568 / NCTC 13146 / CH001A).